Consider the following 398-residue polypeptide: GTP cyclohydrolase-2 (398 aa).

The unknown stretch occupies residues 1-172; it reads MNTPTHTHPH…TAAAGASTTE (172 aa). The tract at residues 173 to 398 is GTP cyclohydrolase II; the sequence is YELVTRTPVP…VKSIPKTGHA (226 aa). Residue 220 to 224 participates in GTP binding; that stretch reads RVHSS. Zn(2+) is bound by residues Cys225, Cys236, and Cys238. Residues Gln241, 263-265, and Thr285 contribute to the GTP site; that span reads EGR. The active-site Proton acceptor is the Asp297. Arg299 (nucleophile) is an active-site residue. GTP contacts are provided by Ser320 and Lys325. Residues 375–398 form a disordered region; it reads QRPQDPSETVDGETVKSIPKTGHA.

In the C-terminal section; belongs to the GTP cyclohydrolase II family. Zn(2+) serves as cofactor.

The catalysed reaction is GTP + 4 H2O = 2,5-diamino-6-hydroxy-4-(5-phosphoribosylamino)-pyrimidine + formate + 2 phosphate + 3 H(+). It functions in the pathway cofactor biosynthesis; riboflavin biosynthesis; 5-amino-6-(D-ribitylamino)uracil from GTP: step 1/4. Functionally, catalyzes the conversion of GTP to 2,5-diamino-6-ribosylamino-4(3H)-pyrimidinone 5'-phosphate (DARP), formate and pyrophosphate. In Xylella fastidiosa (strain 9a5c), this protein is GTP cyclohydrolase-2 (ribA).